We begin with the raw amino-acid sequence, 363 residues long: Small ribosomal subunit biogenesis GTPase RsgA (363 aa).

The CP-type G domain occupies 112-268 (HQQVIAANID…LIDTPGMREL (157 aa)). Residues 157-160 (TKAD) and 210-218 (GSSGAGKST) each bind GTP. Cysteine 291, cysteine 296, histidine 298, and cysteine 304 together coordinate Zn(2+). Positions 340-363 (RVAQNNRGKGSGKRPASVDRPGRR) are disordered.

Belongs to the TRAFAC class YlqF/YawG GTPase family. RsgA subfamily. In terms of assembly, monomer. Associates with 30S ribosomal subunit, binds 16S rRNA. Requires Zn(2+) as cofactor.

The protein localises to the cytoplasm. One of several proteins that assist in the late maturation steps of the functional core of the 30S ribosomal subunit. Helps release RbfA from mature subunits. May play a role in the assembly of ribosomal proteins into the subunit. Circularly permuted GTPase that catalyzes slow GTP hydrolysis, GTPase activity is stimulated by the 30S ribosomal subunit. This is Small ribosomal subunit biogenesis GTPase RsgA from Xanthomonas campestris pv. campestris (strain 8004).